The following is a 440-amino-acid chain: Sialyltransferase-like protein 2 (440 aa).

The Cytoplasmic portion of the chain corresponds to 1-5; that stretch reads MKLLH. The chain crosses the membrane as a helical; Signal-anchor for type II membrane protein span at residues 6-26; that stretch reads LIFLLALTTGISAVLIYIIGV. Residues 27–440 are Lumenal-facing; that stretch reads SNLYESNRFT…HGQLCITPAD (414 aa). Asn113 and Asn149 each carry an N-linked (GlcNAc...) asparagine glycan.

It belongs to the glycosyltransferase 29 family.

It localises to the golgi apparatus membrane. In terms of biological role, may be involved in the transfer of 2-keto-3-deoxy-D-lyxo-heptulosaric acid (Dha) and/or 2-keto-3-deoxy-D-manno-octulosonic acid (Kdo) on the homogalacturonan backbone of rhamnogalacturonan-II. Required for efficient pollen grain germination and pollen tube elongation. Does not possess sialyltransferase activity in vitro. This is Sialyltransferase-like protein 2 from Arabidopsis thaliana (Mouse-ear cress).